The following is a 187-amino-acid chain: MLSSLSPYMANPRNTLSQVLNFGLVLSSAFMVWKALSVITNSASPVVVVLSGSMEPAFQRGDLLFLWNRSPRVDVGEIVVYNVQGKDIPIVHRVMRVFPDVPTTGGEDVEGVEASQKLLTKGDNNLSDDTELYAPGQEFLDRKTDLMGSVRGYVPAIGYVTIMLSEHPWLKSVLLGFMGLMVMLQRE.

The Cytoplasmic segment spans residues 1-18 (MLSSLSPYMANPRNTLSQ). The helical; Signal-anchor for type II membrane protein transmembrane segment at 19-39 (VLNFGLVLSSAFMVWKALSVI) threads the bilayer. Residues 40-187 (TNSASPVVVV…MGLMVMLQRE (148 aa)) lie on the Lumenal side of the membrane. Catalysis depends on charge relay system residues Ser53 and His92. The N-linked (GlcNAc...) asparagine glycan is linked to Asn125. The active-site Charge relay system is Asp129. Positions 173-184 (VLLGFMGLMVML) are C-terminal short (CTS) helix.

It belongs to the peptidase S26B family. In terms of assembly, component of the signal peptidase complex (SPC) composed of a catalytic subunit SEC11 and three accessory subunits SPC1, SPC2 and SPC3. The complex induces a local thinning of the ER membrane which is used to measure the length of the signal peptide (SP) h-region of protein substrates. This ensures the selectivity of the complex towards h-regions shorter than 18-20 amino acids. SPC associates with the translocon complex.

It localises to the endoplasmic reticulum membrane. It carries out the reaction Cleavage of hydrophobic, N-terminal signal or leader sequences from secreted and periplasmic proteins.. Its function is as follows. Catalytic component of the signal peptidase complex (SPC) which catalyzes the cleavage of N-terminal signal sequences from nascent proteins as they are translocated into the lumen of the endoplasmic reticulum. Specifically cleaves N-terminal signal peptides that contain a hydrophobic alpha-helix (h-region) shorter than 18-20 amino acids. The polypeptide is Signal peptidase complex catalytic subunit SEC11 (SEC11) (Ajellomyces capsulatus (strain G186AR / H82 / ATCC MYA-2454 / RMSCC 2432) (Darling's disease fungus)).